Here is a 98-residue protein sequence, read N- to C-terminus: Small ribosomal subunit protein uS19 (98 aa).

The interval 74 to 98 is disordered; sequence FAPTRNYRGHAGGKSEKGGSAPRKK.

It belongs to the universal ribosomal protein uS19 family.

In terms of biological role, protein S19 forms a complex with S13 that binds strongly to the 16S ribosomal RNA. The sequence is that of Small ribosomal subunit protein uS19 from Chlorobium chlorochromatii (strain CaD3).